Reading from the N-terminus, the 599-residue chain is Aspartate--tRNA(Asp/Asn) ligase (599 aa).

Glu-172 lines the L-aspartate pocket. Positions 196–199 (QLFK) are aspartate. Arg-218 contributes to the L-aspartate binding site. Residues 218-220 (RDE) and Gln-227 each bind ATP. His-451 provides a ligand contact to L-aspartate. ATP is bound at residue Glu-485. Position 492 (Arg-492) interacts with L-aspartate. 537–540 (GLDR) lines the ATP pocket.

It belongs to the class-II aminoacyl-tRNA synthetase family. Type 1 subfamily. Homodimer.

The protein resides in the cytoplasm. It catalyses the reaction tRNA(Asx) + L-aspartate + ATP = L-aspartyl-tRNA(Asx) + AMP + diphosphate. In terms of biological role, aspartyl-tRNA synthetase with relaxed tRNA specificity since it is able to aspartylate not only its cognate tRNA(Asp) but also tRNA(Asn). Reaction proceeds in two steps: L-aspartate is first activated by ATP to form Asp-AMP and then transferred to the acceptor end of tRNA(Asp/Asn). This Dechloromonas aromatica (strain RCB) protein is Aspartate--tRNA(Asp/Asn) ligase.